Here is a 476-residue protein sequence, read N- to C-terminus: Sulfate adenylyltransferase subunit 1 (476 aa).

Residues 24–239 (KSLLRFLTCG…LLETVDVDYE (216 aa)) enclose the tr-type G domain. Residues 33–40 (GSVDDGKS) are G1. 33-40 (GSVDDGKS) is a binding site for GTP. A G2 region spans residues 91 to 95 (GITID). The interval 112–115 (DTPG) is G3. GTP-binding positions include 112 to 116 (DTPGH) and 167 to 170 (NKMD). A G4 region spans residues 167–170 (NKMD). A G5 region spans residues 205–207 (SAL).

The protein belongs to the TRAFAC class translation factor GTPase superfamily. Classic translation factor GTPase family. CysN/NodQ subfamily. As to quaternary structure, heterodimer composed of CysD, the smaller subunit, and CysN.

The catalysed reaction is sulfate + ATP + H(+) = adenosine 5'-phosphosulfate + diphosphate. It functions in the pathway sulfur metabolism; hydrogen sulfide biosynthesis; sulfite from sulfate: step 1/3. Functionally, with CysD forms the ATP sulfurylase (ATPS) that catalyzes the adenylation of sulfate producing adenosine 5'-phosphosulfate (APS) and diphosphate, the first enzymatic step in sulfur assimilation pathway. APS synthesis involves the formation of a high-energy phosphoric-sulfuric acid anhydride bond driven by GTP hydrolysis by CysN coupled to ATP hydrolysis by CysD. The sequence is that of Sulfate adenylyltransferase subunit 1 from Vibrio parahaemolyticus serotype O3:K6 (strain RIMD 2210633).